Here is a 1453-residue protein sequence, read N- to C-terminus: Leucine-rich repeat-containing protein 9 (1453 aa).

LRR repeat units follow at residues 53–78 (FPNL…CLQL), 97–119 (CRNL…LEKL), 120–141 (IKLK…LQTL), 142–164 (KNLK…LDSN), 166–188 (QLER…NLTR), 224–248 (LQRF…AMKK), and 264–287 (KEDL…RVKL). The interval 302-321 (LKGSGKGHSDGSNNSKVTDP) is disordered. LRR repeat units lie at residues 344 to 367 (LNAL…IYHI), 671 to 693 (KARP…TSVY), 694 to 715 (SHIV…LSKL), 716 to 737 (TGLR…VYHL), 739 to 758 (NLEY…GFRG), 759 to 784 (LMKL…MLCK), 786 to 812 (TTSL…VIGR), 886 to 908 (YLKI…LEKL), 909 to 930 (ENLK…LESC), 931 to 952 (INLE…ISKM), 953 to 975 (TKLT…TFDN), 976 to 1001 (MLHL…SFTL), 1023 to 1048 (LCNL…LFVI), 1092 to 1115 (FKQM…PVDQ), 1116 to 1138 (FRNV…LIYL), 1139 to 1161 (PNVK…LKPQ), 1201 to 1224 (MHSL…QLNR), 1225 to 1247 (LRNL…LDNL), 1248 to 1270 (VVLQ…AFAK), 1272 to 1292 (SSLL…KLQS), 1293 to 1317 (LVKL…KLDV), 1319 to 1345 (STLR…IFRL), and 1365 to 1388 (EFHL…PMDG).

In Homo sapiens (Human), this protein is Leucine-rich repeat-containing protein 9 (LRRC9).